The sequence spans 319 residues: L-lactate dehydrogenase 2 (319 aa).

NAD(+) is bound by residues V16, D37, K42, Y68, and 82-83 (GA). Residues Q85 and R91 each contribute to the substrate site. Residues S104, 121–123 (AAN), and S146 each bind NAD(+). Residue 123-126 (NPVD) participates in substrate binding. 151–154 (DSAR) provides a ligand contact to substrate. H178 functions as the Proton acceptor in the catalytic mechanism. Y222 carries the phosphotyrosine modification. T231 provides a ligand contact to substrate.

The protein belongs to the LDH/MDH superfamily. LDH family. In terms of assembly, homotetramer.

The protein resides in the cytoplasm. It catalyses the reaction (S)-lactate + NAD(+) = pyruvate + NADH + H(+). It functions in the pathway fermentation; pyruvate fermentation to lactate; (S)-lactate from pyruvate: step 1/1. Catalyzes the conversion of lactate to pyruvate (Potential). Contributes to S.aureus growth during nitrosative stress in both aerobically and anaerobically cultured cells, despite playing a secondary role in this resistance mechanism. The protein is L-lactate dehydrogenase 2 of Staphylococcus aureus (strain USA300).